The sequence spans 517 residues: Argininosuccinate lyase, chloroplastic (517 aa).

The N-terminal 45 residues, 1–45 (MGAIDLSFSQSLLFSSSRSNLSSSTHRSVSFLPPGSKSRCLPPLR), are a transit peptide targeting the chloroplast. Positions 79, 166, and 211 each coordinate 2-(N(omega)-L-arginino)succinate. The Proton acceptor role is filled by H212. The active-site Proton donor is the S333. N341, Y373, Q378, and K381 together coordinate 2-(N(omega)-L-arginino)succinate.

The protein belongs to the lyase 1 family. Argininosuccinate lyase subfamily.

The protein localises to the plastid. It localises to the chloroplast. It catalyses the reaction 2-(N(omega)-L-arginino)succinate = fumarate + L-arginine. It functions in the pathway amino-acid biosynthesis; L-arginine biosynthesis; L-arginine from L-ornithine and carbamoyl phosphate: step 3/3. This chain is Argininosuccinate lyase, chloroplastic, found in Arabidopsis thaliana (Mouse-ear cress).